Here is a 1059-residue protein sequence, read N- to C-terminus: Zinc finger protein 628 (1059 aa).

6 consecutive C2H2-type zinc fingers follow at residues 36-58, 64-86, 92-114, 120-142, 148-170, and 176-198; these read YECGECGKSFRWSSRLLHHQRTH, YKCPDCPKAFKGSSALLYHQRGH, YQCPDCPKAFKRSSLLQIHRSVH, FICGQCGLAFKWSSHYQYHLRQH, YPCPDCPKAFKNSSSLRRHRHVH, and YTCGVCGKSFTQSTNLRQHQRVH. Residue threonine 199 is modified to Phosphothreonine. The C2H2-type 7 zinc-finger motif lies at 204 to 226; it reads FRCPLCPKTFTHSSNLLLHQRTH. 3 disordered regions span residues 226 to 247, 260 to 280, and 312 to 351; these read HGAAPAPGTASAAPPPQSREPG, LQPHSPPAPPAPPPPPPPVVP, and EHQPCPGPDAAPQPQEAPAEAPKADQPPSPLPQPPPPAAA. The span at 228 to 237 shows a compositional bias: low complexity; it reads AAPAPGTASA. A compositionally biased stretch (pro residues) spans 263–279; sequence HSPPAPPAPPPPPPPVV. The segment covering 323-335 has biased composition (low complexity); sequence PQPQEAPAEAPKA. A compositionally biased stretch (pro residues) spans 336-351; the sequence is DQPPSPLPQPPPPAAA. 7 C2H2-type zinc fingers span residues 356-378, 386-408, 454-476, 482-504, 510-532, 538-560, and 566-588; these read FACLPCGKSFRTVAGLSRHQHSH, FRCGSCDGSFPQLASLLAHQQCH, YKCAECGKSFKGSSGLRYHLRDH, YQCGECGKAFKRSSLLAIHQRVH, FTCGQCGLTFKWSSHYQYHLRLH, YACGECGKAFRNTSCLRRHRHVH, and HACGVCGKSFAQTSNLRQHQRVH. Threonine 589 is subject to Phosphothreonine. C2H2-type zinc fingers lie at residues 594–616 and 622–644; these read FRCPLCPKTFTHSSNLLLHQRTH and FTCPICGRGFVMAAYLQRHLRTH. Positions 644 to 658 are enriched in low complexity; the sequence is HAPANTPPSTTAPAA. The disordered stretch occupies residues 644–674; that stretch reads HAPANTPPSTTAPAAGPQPPAPLAAARAPPA. Repeat copies occupy residues 818 to 831, 832 to 842, 843 to 853, and 854 to 864. Residues 818–864 are 4 X approximate tandem repeats; sequence VQLQPLRPAPEVTTVQLQPAQEVTTVQLQPAQEVTTVQLQPAQEVTT. Positions 943 to 1059 are interaction with TAF4B; it reads DGEQTRLCVQ…LPAVQLVHTF (117 aa).

In terms of assembly, interacts with TAF4B.

It is found in the nucleus. Functionally, transcriptional activator. Binds DNA on GT-box consensus sequence 5'-TTGGTT-3'. Plays a role in spermiogenesis. This chain is Zinc finger protein 628 (ZNF628), found in Homo sapiens (Human).